Reading from the N-terminus, the 434-residue chain is 3-isopropylmalate dehydratase large subunit 1 (434 aa).

Residues cysteine 308, cysteine 368, and cysteine 371 each contribute to the [4Fe-4S] cluster site.

The protein belongs to the aconitase/IPM isomerase family. LeuC type 2 subfamily. Heterodimer of LeuC and LeuD. The cofactor is [4Fe-4S] cluster.

The catalysed reaction is (2R,3S)-3-isopropylmalate = (2S)-2-isopropylmalate. It functions in the pathway amino-acid biosynthesis; L-leucine biosynthesis; L-leucine from 3-methyl-2-oxobutanoate: step 2/4. In terms of biological role, catalyzes the isomerization between 2-isopropylmalate and 3-isopropylmalate, via the formation of 2-isopropylmaleate. The polypeptide is 3-isopropylmalate dehydratase large subunit 1 (Deinococcus radiodurans (strain ATCC 13939 / DSM 20539 / JCM 16871 / CCUG 27074 / LMG 4051 / NBRC 15346 / NCIMB 9279 / VKM B-1422 / R1)).